The chain runs to 342 residues: Probable allantoicase (342 aa).

The protein belongs to the allantoicase family.

The enzyme catalyses allantoate + H2O = (S)-ureidoglycolate + urea. It participates in nitrogen metabolism; (S)-allantoin degradation; (S)-ureidoglycolate from allantoate (aminidohydrolase route): step 1/1. In terms of biological role, utilization of purines as secondary nitrogen sources, when primary sources are limiting. In Schizosaccharomyces pombe (strain 972 / ATCC 24843) (Fission yeast), this protein is Probable allantoicase.